The primary structure comprises 352 residues: Non-disjunction protein 1 (352 aa).

As to quaternary structure, interacts with MPS3.

The protein localises to the nucleus. Its subcellular location is the chromosome. It localises to the telomere. In terms of biological role, required for telomeric clustering (bouquet stage) during meiosis 1 prophase, formation and efficient homolog pairing, meiosis 1 disjunction, and telomere deletion during meiosis. Also promotes meiotic recombination. This is Non-disjunction protein 1 (NDJ1) from Saccharomyces cerevisiae (strain ATCC 204508 / S288c) (Baker's yeast).